The following is a 104-amino-acid chain: PTS system lactose-specific EIIA component (104 aa).

The PTS EIIA type-3 domain maps to 1–102; it reads MNRDEVQLLG…MKHLIELYKK (102 aa). H78 functions as the Tele-phosphohistidine intermediate in the catalytic mechanism. H78 bears the Phosphohistidine; by HPr mark. D81 provides a ligand contact to Mg(2+).

Homotrimer. It depends on Mg(2+) as a cofactor.

The protein localises to the cytoplasm. In terms of biological role, the phosphoenolpyruvate-dependent sugar phosphotransferase system (sugar PTS), a major carbohydrate active transport system, catalyzes the phosphorylation of incoming sugar substrates concomitantly with their translocation across the cell membrane. The enzyme II LacEF PTS system is involved in lactose transport. This is PTS system lactose-specific EIIA component from Staphylococcus epidermidis (strain ATCC 35984 / DSM 28319 / BCRC 17069 / CCUG 31568 / BM 3577 / RP62A).